Reading from the N-terminus, the 397-residue chain is MEKTIAINAGSSSLKFQLYDMPSERVITAGIVERIGLKDSIFTITVDGEKIKEIIDIPDHEIAVQMLLEKLINHKVIGSYDEITGIGHRVVHGGERFPESVYIDDQVIKDIEALSELAPLHNPANVTGIKAFRKILPDVVSVAVFDTAFHQTMPPASYLYSLPYSYYEDYGIRKYGFHGTSHKYVSERAAELLGRPVEELRLLTCHLGNGASIAAIEGGKSMDTSMGFTPLAGVSMGTRSGNIDPALIPFIMEKTGKTAEQVLDVLNKESGMLGVSGISSDLRDLEDEAAKGNDRAELALQVFVDRIHKYIGSYAARMNGVDAIIFTAGIGENSSYIREKVLRGLEFMGVYWDPALNQVRGEERFLNYPHSPVKVIIIPTNEELMIARDVETIKNNR.

Residue N8 coordinates Mg(2+). Position 15 (K15) interacts with ATP. R89 provides a ligand contact to substrate. D146 (proton donor/acceptor) is an active-site residue. Residues 206-210 (HLGNG), 281-283 (DLR), and 329-333 (GIGEN) each bind ATP. Position 382 (E382) interacts with Mg(2+).

It belongs to the acetokinase family. Homodimer. The cofactor is Mg(2+). Requires Mn(2+) as cofactor.

It is found in the cytoplasm. The catalysed reaction is acetate + ATP = acetyl phosphate + ADP. It functions in the pathway metabolic intermediate biosynthesis; acetyl-CoA biosynthesis; acetyl-CoA from acetate: step 1/2. Its function is as follows. Catalyzes the formation of acetyl phosphate from acetate and ATP. Can also catalyze the reverse reaction. The chain is Acetate kinase 1 from Listeria monocytogenes serovar 1/2a (strain ATCC BAA-679 / EGD-e).